Consider the following 173-residue polypeptide: MNLENKNKEIPEEFKKLAEDFSKNGFITTSLDNLINWSRAGSLHWMTFGLACCAVEMMQTAMPRYDLERFGAAPRGSPRQSDVMIVAGTLTNKMAPALRKVYDQMPEPRYVISMGSCANGGGYYHYSYSVVRGCDKIVPVDIYVPGCPPSAEALLYGILQLQKKIRNKGSFER.

4 residues coordinate [4Fe-4S] cluster: C52, C53, C117, and C147.

Belongs to the complex I 20 kDa subunit family. As to quaternary structure, NDH-1 is composed of 14 different subunits. Subunits NuoB, C, D, E, F, and G constitute the peripheral sector of the complex. The cofactor is [4Fe-4S] cluster.

Its subcellular location is the cell inner membrane. The catalysed reaction is a quinone + NADH + 5 H(+)(in) = a quinol + NAD(+) + 4 H(+)(out). Its function is as follows. NDH-1 shuttles electrons from NADH, via FMN and iron-sulfur (Fe-S) centers, to quinones in the respiratory chain. Couples the redox reaction to proton translocation (for every two electrons transferred, four hydrogen ions are translocated across the cytoplasmic membrane), and thus conserves the redox energy in a proton gradient. In Pelagibacter ubique (strain HTCC1062), this protein is NADH-quinone oxidoreductase subunit B.